An 84-amino-acid chain; its full sequence is MIKGIAGVGGTALGVGGGVAAPPVSAAAVGSTLLAGKGVCLGLGLGLGAWGPVLLGVAGLACAASLCDYLKNRKAQAEASAEPA.

Topologically, residues 1–3 are cytoplasmic; that stretch reads MIK. Residues 4–24 traverse the membrane as a helical segment; it reads GIAGVGGTALGVGGGVAAPPV. The Lumenal portion of the chain corresponds to 25 to 40; sequence SAAAVGSTLLAGKGVC. The tract at residues 41–48 is LG repeat; the sequence is LGLGLGLG. The chain crosses the membrane as a helical span at residues 41-61; that stretch reads LGLGLGLGAWGPVLLGVAGLA. Over 62-84 the chain is Cytoplasmic; it reads CAASLCDYLKNRKAQAEASAEPA.

Belongs to the magnetosome MamG (TC 9.B.95) protein family.

It is found in the magnetosome membrane. Functionally, plays a role in regulating magnetite crystal size. This Magnetospirillum gryphiswaldense (strain DSM 6361 / JCM 21280 / NBRC 15271 / MSR-1) protein is Magnetosome protein MamG.